A 64-amino-acid polypeptide reads, in one-letter code: Large ribosomal subunit protein bL35 (64 aa).

Residues 1 to 45 show a composition bias toward basic residues; that stretch reads MPKMKTHKGAAKRFKKTGKGKIKRRKAFKSHILTKKTPKRKRNLR. Positions 1 to 64 are disordered; that stretch reads MPKMKTHKGA…EEKRIKRLLP (64 aa).

The protein belongs to the bacterial ribosomal protein bL35 family.

The protein is Large ribosomal subunit protein bL35 of Natranaerobius thermophilus (strain ATCC BAA-1301 / DSM 18059 / JW/NM-WN-LF).